The following is a 315-amino-acid chain: MLEIEKPKIEIVEQSEDNTYGKFVVEPLERGYGITLGNSLRRILLSSLPGAAVTSVKIEGVLHEFATVPGVQEDVTDIILNLKNLCLKIHSDEEKVLRVEAQTEGPVTAGDIIHDADVEILNPDLHLATLDTGGRLFMEISVNKGRGYSSAEKNKKGEHIIGVIPIDSIYTPVRRVNYNVENTRVGQITDYDKLTLEVWTNGSIRPDEATSLSAKILSEHLRLFIGLTETVNDVEIMVEKEEEQKDKILEMTIEELDMSVRSYNCLKRAGINTVEELIQRNEEDMMKVRNLGKKSLEEVINKLHELGLSLRQEDE.

The segment at 1-228 (MLEIEKPKIE…EHLRLFIGLT (228 aa)) is alpha N-terminal domain (alpha-NTD). Positions 246 to 315 (DKILEMTIEE…LGLSLRQEDE (70 aa)) are alpha C-terminal domain (alpha-CTD).

It belongs to the RNA polymerase alpha chain family. In terms of assembly, homodimer. The RNAP catalytic core consists of 2 alpha, 1 beta, 1 beta' and 1 omega subunit. When a sigma factor is associated with the core the holoenzyme is formed, which can initiate transcription.

The enzyme catalyses RNA(n) + a ribonucleoside 5'-triphosphate = RNA(n+1) + diphosphate. Its function is as follows. DNA-dependent RNA polymerase catalyzes the transcription of DNA into RNA using the four ribonucleoside triphosphates as substrates. The polypeptide is DNA-directed RNA polymerase subunit alpha (Desulforamulus reducens (strain ATCC BAA-1160 / DSM 100696 / MI-1) (Desulfotomaculum reducens)).